The following is a 586-amino-acid chain: MATLTEPSSSLSFTSSHFSYGSIGSNHFSSSSASNPEVVSLTKLSSNLEQLLSNSDCDYSDAEIIVDGVPVGVHRCILAARSKFFQDLFKKEKKISKTEKPKYQLREMLPYGAVAHEAFLYFLSYIYTGRLKPFPLEVSTCVDPVCSHDCCRPAIDFVVQLMYASSVLQVPELVSSFQRRLCNFVEKTLVENVLPILMVAFNCKLTQLLDQCIERVARSDLYRFCIEKEVPPEVAEKIKQLRLISPQDEETSPKISEKLLERIGKILKALDSDDVELVKLLLTESDITLDQANGLHYSVVYSDPKVVAEILALDMGDVNYRNSRGYTVLHFAAMRREPSIIISLIDKGANASEFTSDGRSAVNILRRLTNPKDYHTKTAKGRESSKARLCIDILEREIRKNPMVLDTPMCSISMPEDLQMRLLYLEKRVGLAQLFFPTEAKVAMDIGNVEGTSEFTGLSPPSSGLTGNLSQVDLNETPHMQTQRLLTRMVALMKTVETGRRFFPYGSEVLDKYMAEYIDDDILDDFHFEKGSTHERRLKRMRYRELKDDVQKAYSKDKESKIARSCLSASSSPSSSSIRDDLHNTT.

Position 10 is a phosphoserine (S10). In terms of domain architecture, BTB spans 60 to 135; sequence SDAEIIVDGV…IYTGRLKPFP (76 aa). Residues 138 to 152 form a C2HC NPR-type zinc finger; sequence VSTCVDPVCSHDCCR. Positions 141, 146, 148, and 151 each coordinate Zn(2+). 3 ANK repeats span residues 261–291, 293–320, and 324–353; these read ERIG…TLDQ, NGLH…DVNY, and RGYT…NASE. The tract at residues 383 to 523 is salicylic acid-binding core (SBC); that stretch reads ESSKARLCID…MAEYIDDDIL (141 aa). Residue R428 coordinates salicylate. The tract at residues 554-586 is disordered; the sequence is YSKDKESKIARSCLSASSSPSSSSIRDDLHNTT. Residues 565-577 show a composition bias toward low complexity; sequence SCLSASSSPSSSS.

It belongs to the plant 'ANKYRIN-BTB/POZ' family. 'NPR1-like' subfamily. In terms of assembly, forms homodimers and heterodimers with NPR4 in the presence of salicylic acid (SA). Interacts with TGA2, TGA3, TGA5 and TGA6. Interacts with CUL3A, a core component of the cullin-RING ubiquitin ligases (CRL). Interacts with TGA2 in vivo in the nucleus. Binds to NPR1; this interaction is promoted by association with SA, probably due to conformational changes.

Its subcellular location is the nucleus. It functions in the pathway protein modification; protein ubiquitination. In terms of biological role, salicylic acid (SA)-binding substrate-specific adapter of an E3 ubiquitin-protein ligase complex (CUL3-RBX1-BTB) which mediates the ubiquitination and subsequent proteasomal degradation of NPR1 in response to SA. Together with NPR4, acts as receptor of salicylic acid to monitor immunity in a NPR1-dependent manner and induce systemic acquired resistance (SAR). Involved in the regulation of basal defense responses against pathogens, and may be implicated in the cross-talk between the SA- and JA-dependent signaling pathways. The protein is Regulatory protein NPR3 of Arabidopsis thaliana (Mouse-ear cress).